We begin with the raw amino-acid sequence, 458 residues long: cAMP-dependent protein kinase regulatory subunit (458 aa).

The segment at 28–222 (QFAANYFNKK…GLESAVGKNF (195 aa)) is dimerization and phosphorylation. Position 184 is a phosphoserine (serine 184). Residues 223–338 (LFNK…FLKS), glutamate 288, arginine 297, 341–457 (LLKS…RADK), glutamate 407, and arginine 416 each bind 3',5'-cyclic AMP.

It belongs to the cAMP-dependent kinase regulatory chain family. In terms of assembly, tetramer, composed of 2 regulatory (R) and 2 catalytic (C) subunits. In the presence of cAMP it dissociates into 2 active monomeric C subunits and an R dimer.

This chain is cAMP-dependent protein kinase regulatory subunit (PKAR), found in Eremothecium gossypii (strain ATCC 10895 / CBS 109.51 / FGSC 9923 / NRRL Y-1056) (Yeast).